Reading from the N-terminus, the 258-residue chain is Imidazole glycerol phosphate synthase subunit HisF (258 aa).

Residues Asp12 and Asp131 contribute to the active site.

It belongs to the HisA/HisF family. In terms of assembly, heterodimer of HisH and HisF.

It localises to the cytoplasm. It carries out the reaction 5-[(5-phospho-1-deoxy-D-ribulos-1-ylimino)methylamino]-1-(5-phospho-beta-D-ribosyl)imidazole-4-carboxamide + L-glutamine = D-erythro-1-(imidazol-4-yl)glycerol 3-phosphate + 5-amino-1-(5-phospho-beta-D-ribosyl)imidazole-4-carboxamide + L-glutamate + H(+). The protein operates within amino-acid biosynthesis; L-histidine biosynthesis; L-histidine from 5-phospho-alpha-D-ribose 1-diphosphate: step 5/9. In terms of biological role, IGPS catalyzes the conversion of PRFAR and glutamine to IGP, AICAR and glutamate. The HisF subunit catalyzes the cyclization activity that produces IGP and AICAR from PRFAR using the ammonia provided by the HisH subunit. The polypeptide is Imidazole glycerol phosphate synthase subunit HisF (Sinorhizobium medicae (strain WSM419) (Ensifer medicae)).